Reading from the N-terminus, the 463-residue chain is Quinolone resistance protein NorB (463 aa).

The next 14 membrane-spanning stretches (helical) occupy residues 17–37 (IGIV…VNVV), 53–73 (IAVS…GGLA), 86–106 (IILN…LLLI), 107–127 (IGRL…LSII), 142–162 (YWSI…GAVA), 165–185 (LGWR…LFLI), 201–221 (FDIK…ILIT), 230–250 (SLLF…FIVL), 273–293 (TASN…NTFV), 299–319 (YSSL…LIMI), 334–354 (PMLI…LTFL), 357–377 (IFYV…LGIY), 403–423 (MASA…YAIV), and 435–455 (IALW…LLLV).

The protein belongs to the major facilitator superfamily. TCR/Tet family.

Its subcellular location is the cell membrane. In terms of biological role, multidrug efflux pump that acts independently of NorA and is one of the factors that confers resistance against diverse quinolones and chemical compounds. The sequence is that of Quinolone resistance protein NorB (norB) from Staphylococcus aureus (strain USA300).